Here is a 604-residue protein sequence, read N- to C-terminus: UvrABC system protein C (604 aa).

Residues 15–92 enclose the GIY-YIG domain; it reads DLPGCYLMKN…IQKHQPYFNI (78 aa). The UVR domain occupies 197 to 232; it reads ETVKKQLTKRMDQAAADLEFERAAELRDQLNYIEMT.

This sequence belongs to the UvrC family. In terms of assembly, interacts with UvrB in an incision complex.

Its subcellular location is the cytoplasm. The UvrABC repair system catalyzes the recognition and processing of DNA lesions. UvrC both incises the 5' and 3' sides of the lesion. The N-terminal half is responsible for the 3' incision and the C-terminal half is responsible for the 5' incision. The sequence is that of UvrABC system protein C from Lactiplantibacillus plantarum (strain ATCC BAA-793 / NCIMB 8826 / WCFS1) (Lactobacillus plantarum).